The chain runs to 88 residues: Long neurotoxin 31 (88 aa).

Residues M1–S21 form the signal peptide. 5 cysteine pairs are disulfide-bonded: C24-C42, C35-C63, C48-C52, C67-C78, and C79-C84.

Belongs to the three-finger toxin family. Long-chain subfamily. Type II alpha-neurotoxin sub-subfamily. In terms of tissue distribution, expressed by the venom gland.

It is found in the secreted. In terms of biological role, binds with high affinity to muscular (alpha-1/CHRNA1) and neuronal (alpha-7/CHRNA7) nicotinic acetylcholine receptor (nAChR) and inhibits acetylcholine from binding to the receptor, thereby impairing neuromuscular and neuronal transmission. The protein is Long neurotoxin 31 of Drysdalia coronoides (White-lipped snake).